Reading from the N-terminus, the 564-residue chain is Pyruvate decarboxylase (564 aa).

Positions 28 and 115 each coordinate pyruvate. Thiamine diphosphate is bound by residues Thr-390 and 413–415 (GSI). A Mg(2+)-binding site is contributed by Asp-444. Thiamine diphosphate is bound by residues 445–446 (GS) and 471–476 (NDGYTI). Mg(2+)-binding residues include Asn-471 and Gly-473. Glu-477 is a binding site for pyruvate.

This sequence belongs to the TPP enzyme family. Homotetramer. Requires Mg(2+) as cofactor. The cofactor is thiamine diphosphate.

It carries out the reaction a 2-oxocarboxylate + H(+) = an aldehyde + CO2. The catalysed reaction is pyruvate + H(+) = acetaldehyde + CO2. In Candida glabrata (strain ATCC 2001 / BCRC 20586 / JCM 3761 / NBRC 0622 / NRRL Y-65 / CBS 138) (Yeast), this protein is Pyruvate decarboxylase (PDC1).